Reading from the N-terminus, the 726-residue chain is MVVAEQLEDVFVGGYLVIYASQDGAGEEYRLPKEVVARALPVEPGRVPVNINHDASCRVGSVISIVDVEKGLFFLGVVSGSLALAMFKYVARDLFRADDGDSPGGGAESETRSDEALPANTLSEREKFLYLLSNVLPSLSLSSARLADGYSPADDFFAHVALCELGKRDGTIAIYGSSPPEVLDAFSGLDDAAKRELARSAEEWTTSSRREEPVDEAMVSECLLRKFMNNAFLMDRGEYLRARRHLADVRRPKYLQAAETTCLSSANPRSSGKAAFSCEARGLDEAGAGAIGRAPESGMAASADQHAQDGIKIRLERSRSQIGPGAMSSVSQPAAAPYSGAMADSAAQVPSAQPPRIPCPPTGQTEMIYVPLGTYNDLVVSAAQARRGEDRRQQLSAPPPQHAQQIVQRETGINSSSPALAPAGRGSYASASHIMHQPAFQTQQPCWPQQQQYVQAPCGGHGIGYYGQAVSRRGGSSGDGAPTTRSTGAPGAGGLSMFGMQHAGPQTHFTAPLHGLPTGFPAHGSFLHAPGYLGAMPPIQVYAPQPQQHPPSLDTRIEALLAALEKERASEQGAAEGPQQSLVAGQNKKKALLKRSMEHQREEEEDDESAPEAPYFPGEAAASCKRQAKRQRAAAEGEEQVAPSFSDLIQGLAALHKDVAEMKASVAGIGAPQASQPTPVAQPEHEEPKQAPATVDASSSKKLKDSRRAAEKRRAADEFARIMSTE.

Catalysis depends on charge relay system residues H53, S140, and H159. A disordered region spans residues 321–362 (QIGPGAMSSVSQPAAAPYSGAMADSAAQVPSAQPPRIPCPPT). The segment covering 352 to 361 (AQPPRIPCPP) has biased composition (pro residues). Residues 365–384 (TEMIYVPLGTYNDLVVSAAQ) are interaction with pAP. Disordered regions lie at residues 385–427 (ARRG…GRGS), 472–492 (RRGG…APGA), 568–644 (RASE…VAPS), and 668–726 (GIGA…MSTE). Over residues 402–418 (HAQQIVQRETGINSSSP) the composition is skewed to polar residues. Basic and acidic residues predominate over residues 702–720 (KLKDSRRAAEKRRAADEFA). Residues 706-726 (SRRAAEKRRAADEFARIMSTE) form an interaction with major capsid protein region.

This sequence belongs to the herpesviridae capsid scaffolding protein family. In terms of assembly, homomultimer. Interacts with major capsid protein. Exists in a monomer-dimer equilibrium with the dimer being the active species. Post-translationally, capsid scaffolding protein is cleaved by assemblin after formation of the spherical procapsid. As a result, the capsid obtains its mature, icosahedral shape. Cleavages occur at two or more sites: release (R-site) and maturation (M-site).

It is found in the host cytoplasm. The protein localises to the host nucleus. It carries out the reaction Cleaves -Ala-|-Ser- and -Ala-|-Ala- bonds in the scaffold protein.. Its function is as follows. Acts as a scaffold protein by binding major capsid protein in the cytoplasm, inducing the nuclear localization of both proteins. Multimerizes in the nucleus such as major capsid protein forms the icosahedral T=16 capsid. Autocatalytic cleavage releases the assembly protein, and subsequently abolishes interaction with major capsid protein. Cleavages products are evicted from the capsid before or during DNA packaging. In terms of biological role, protease that plays an essential role in virion assembly within the nucleus. Catalyzes the cleavage of the assembly protein after formation of the spherical procapsid. By that cleavage, the capsid matures and gains its icosahedral shape. The cleavage sites seem to include -Ala-Ser-, -Ala-Ala-, as well as Ala-Thr bonds. Assemblin and cleavages products are evicted from the capsid before or during DNA packaging. Plays a major role in capsid assembly. Acts as a scaffold protein by binding major capsid protein. Multimerizes in the nucleus such as major capsid protein forms the icosahedral T=16 capsid. Cleaved by assemblin after capsid completion. The cleavages products are evicted from the capsid before or during DNA packaging. The protein is Capsid scaffolding protein (UL26) of Psittacid herpesvirus 1 (isolate Amazon parrot/-/97-0001/1997) (PsHV-1).